We begin with the raw amino-acid sequence, 194 residues long: MSMYNYVKEAWKVPANSYVKELQWARMQDWRKEPSVIRIERPTRIDRARNLGYKAKQGIVVVRVSVRRGGLRKPRPKHSKKPATMGINKITMAKSIQRIAEERAAKKYPNMEVLNSYWVGQDGKQKWYEVILVDPCQPSIKNDKSYNWLCKGTHKGRVTRGLTSAGKKGRGLMYKGKGAEKARPSVRANGKKTK.

Positions 161–194 are disordered; sequence GLTSAGKKGRGLMYKGKGAEKARPSVRANGKKTK.

It belongs to the eukaryotic ribosomal protein eL15 family.

This Methanococcus maripaludis (strain C5 / ATCC BAA-1333) protein is Large ribosomal subunit protein eL15.